Consider the following 250-residue polypeptide: Pimeloyl-[acyl-carrier protein] methyl ester esterase (250 aa).

Residues tryptophan 12, 71–72, and 138–142 contribute to the substrate site; these read SL and FVALQ. Serine 71 serves as the catalytic Nucleophile. Residues aspartate 202 and histidine 230 contribute to the active site. Position 230 (histidine 230) interacts with substrate.

It belongs to the AB hydrolase superfamily. Carboxylesterase BioH family. In terms of assembly, monomer.

The protein localises to the cytoplasm. The catalysed reaction is 6-carboxyhexanoyl-[ACP] methyl ester + H2O = 6-carboxyhexanoyl-[ACP] + methanol + H(+). It participates in cofactor biosynthesis; biotin biosynthesis. Functionally, the physiological role of BioH is to remove the methyl group introduced by BioC when the pimeloyl moiety is complete. It allows to synthesize pimeloyl-ACP via the fatty acid synthetic pathway through the hydrolysis of the ester bonds of pimeloyl-ACP esters. The protein is Pimeloyl-[acyl-carrier protein] methyl ester esterase of Aromatoleum aromaticum (strain DSM 19018 / LMG 30748 / EbN1) (Azoarcus sp. (strain EbN1)).